The primary structure comprises 232 residues: tRNA (guanine-N(1)-)-methyltransferase (232 aa).

Gly-116 provides a ligand contact to S-adenosyl-L-methionine.

Belongs to the RNA methyltransferase TrmD family. Homodimer.

The protein resides in the cytoplasm. The catalysed reaction is guanosine(37) in tRNA + S-adenosyl-L-methionine = N(1)-methylguanosine(37) in tRNA + S-adenosyl-L-homocysteine + H(+). Its function is as follows. Specifically methylates guanosine-37 in various tRNAs. The sequence is that of tRNA (guanine-N(1)-)-methyltransferase from Chlorobium luteolum (strain DSM 273 / BCRC 81028 / 2530) (Pelodictyon luteolum).